Consider the following 337-residue polypeptide: MSPSADTPEISNSADSTVLSLKKSLCSEDSPLPIRFRALFSLKHVATTADDDATRVAAIEAIAAGFASPSALLKHELAYCLGQTGNTAAVKPLRQVLSDLKEDPMCRHEAAEALGALGWADNLDILREYRDRKEEDISIVETCEIAIERIEWENSAERQKEKLRPSDFASIDPAPPMPESDKEAEVEDLGRKLMDTNADLFSRYRAMFALRDLASPPDLPTATPAVLALAKGLSDSSALFRHEIAFVFGQLSHPASIPALTEALSNTNEASMVRHEAAEALGSLGEKDGVEDTLRKFLHDKEKVVRESCIVALDIAEYEKGEDAEYALIPESAGAAA.

HEAT-like PBS-type repeat units lie at residues 73–99 (LKHE…VLSD) and 106–132 (CRHE…YRDR). Residues H75, E76, H108, and E109 each coordinate Fe cation. Residues 156–165 (AERQKEKLRP) are compositionally biased toward basic and acidic residues. The segment at 156-183 (AERQKEKLRPSDFASIDPAPPMPESDKE) is disordered. 3 HEAT-like PBS-type repeats span residues 202 to 235 (SRYR…GLSD), 240 to 266 (FRHE…ALSN), and 273 to 300 (VRHE…FLHD). H242, E243, H275, and E276 together coordinate Fe cation.

Belongs to the deoxyhypusine hydroxylase family. Fe(2+) serves as cofactor.

It localises to the cytoplasm. It is found in the nucleus. The enzyme catalyses [eIF5A protein]-deoxyhypusine + AH2 + O2 = [eIF5A protein]-hypusine + A + H2O. It participates in protein modification; eIF5A hypusination. Functionally, catalyzes the hydroxylation of the N(6)-(4-aminobutyl)-L-lysine intermediate to form hypusine, an essential post-translational modification only found in mature eIF-5A factor. The sequence is that of Deoxyhypusine hydroxylase from Gibberella zeae (strain ATCC MYA-4620 / CBS 123657 / FGSC 9075 / NRRL 31084 / PH-1) (Wheat head blight fungus).